A 119-amino-acid chain; its full sequence is Large ribosomal subunit protein bL20 (119 aa).

This sequence belongs to the bacterial ribosomal protein bL20 family.

Binds directly to 23S ribosomal RNA and is necessary for the in vitro assembly process of the 50S ribosomal subunit. It is not involved in the protein synthesizing functions of that subunit. This is Large ribosomal subunit protein bL20 from Metamycoplasma arthritidis (strain 158L3-1) (Mycoplasma arthritidis).